A 419-amino-acid polypeptide reads, in one-letter code: CCA-adding enzyme (419 aa).

Positions 8 and 11 each coordinate ATP. CTP is bound by residues Gly-8 and Arg-11. 2 residues coordinate Mg(2+): Asp-21 and Asp-23. ATP is bound by residues Arg-91, Arg-137, and Arg-140. Arg-91, Arg-137, and Arg-140 together coordinate CTP.

This sequence belongs to the tRNA nucleotidyltransferase/poly(A) polymerase family. Bacterial CCA-adding enzyme type 2 subfamily. Mg(2+) is required as a cofactor.

The catalysed reaction is a tRNA precursor + 2 CTP + ATP = a tRNA with a 3' CCA end + 3 diphosphate. It carries out the reaction a tRNA with a 3' CCA end + 2 CTP + ATP = a tRNA with a 3' CCACCA end + 3 diphosphate. Functionally, catalyzes the addition and repair of the essential 3'-terminal CCA sequence in tRNAs without using a nucleic acid template. Adds these three nucleotides in the order of C, C, and A to the tRNA nucleotide-73, using CTP and ATP as substrates and producing inorganic pyrophosphate. tRNA 3'-terminal CCA addition is required both for tRNA processing and repair. Also involved in tRNA surveillance by mediating tandem CCA addition to generate a CCACCA at the 3' terminus of unstable tRNAs. While stable tRNAs receive only 3'-terminal CCA, unstable tRNAs are marked with CCACCA and rapidly degraded. The sequence is that of CCA-adding enzyme from Buchnera aphidicola subsp. Baizongia pistaciae (strain Bp).